A 309-amino-acid chain; its full sequence is Formamidopyrimidine-DNA glycosylase (309 aa).

Proline 2 serves as the catalytic Schiff-base intermediate with DNA. Residue glutamate 3 is the Proton donor of the active site. Lysine 56 serves as the catalytic Proton donor; for beta-elimination activity. Residues histidine 106 and arginine 129 each coordinate DNA. The FPG-type zinc-finger motif lies at 271-305 (NVYGRQGNACPHCESTLENIKLNGRASVYCPLCQP). Residue arginine 295 is the Proton donor; for delta-elimination activity of the active site.

It belongs to the FPG family. In terms of assembly, monomer. Requires Zn(2+) as cofactor.

It carries out the reaction Hydrolysis of DNA containing ring-opened 7-methylguanine residues, releasing 2,6-diamino-4-hydroxy-5-(N-methyl)formamidopyrimidine.. The catalysed reaction is 2'-deoxyribonucleotide-(2'-deoxyribose 5'-phosphate)-2'-deoxyribonucleotide-DNA = a 3'-end 2'-deoxyribonucleotide-(2,3-dehydro-2,3-deoxyribose 5'-phosphate)-DNA + a 5'-end 5'-phospho-2'-deoxyribonucleoside-DNA + H(+). Involved in base excision repair of DNA damaged by oxidation or by mutagenic agents. Acts as a DNA glycosylase that recognizes and removes damaged bases. Has a preference for oxidized purines, such as 7,8-dihydro-8-oxoguanine (8-oxoG). Has AP (apurinic/apyrimidinic) lyase activity and introduces nicks in the DNA strand. Cleaves the DNA backbone by beta-delta elimination to generate a single-strand break at the site of the removed base with both 3'- and 5'-phosphates. This is Formamidopyrimidine-DNA glycosylase from Psychrobacter arcticus (strain DSM 17307 / VKM B-2377 / 273-4).